The primary structure comprises 232 residues: Ribose-5-phosphate isomerase A (232 aa).

Residues 28-31, 83-86, and 96-99 contribute to the substrate site; these read TGST, DGAD, and KGGG. Glu105 acts as the Proton acceptor in catalysis. Substrate is bound at residue Lys123.

The protein belongs to the ribose 5-phosphate isomerase family. As to quaternary structure, homodimer.

It catalyses the reaction aldehydo-D-ribose 5-phosphate = D-ribulose 5-phosphate. It participates in carbohydrate degradation; pentose phosphate pathway; D-ribose 5-phosphate from D-ribulose 5-phosphate (non-oxidative stage): step 1/1. In terms of biological role, catalyzes the reversible conversion of ribose-5-phosphate to ribulose 5-phosphate. In Rhodopseudomonas palustris (strain BisB5), this protein is Ribose-5-phosphate isomerase A.